We begin with the raw amino-acid sequence, 178 residues long: MTKKEQALIEQYAKSLVEVASEHHSLDALQADVLAILETFVTTNLDQSLSSLAVPHAEKIKLLTLLKGNNSVYMNNFLNLILQNEREAYLYQMLQTVLNEIAIVSNQYDVTVTSSLPLTEEQKSRVRAVVAKKFAVTAGRLIEKVDPSLIGGFIISVNNKVIDTSIRRQLQAFKMNLK.

This sequence belongs to the ATPase delta chain family. As to quaternary structure, F-type ATPases have 2 components, F(1) - the catalytic core - and F(0) - the membrane proton channel. F(1) has five subunits: alpha(3), beta(3), gamma(1), delta(1), epsilon(1). F(0) has three main subunits: a(1), b(2) and c(10-14). The alpha and beta chains form an alternating ring which encloses part of the gamma chain. F(1) is attached to F(0) by a central stalk formed by the gamma and epsilon chains, while a peripheral stalk is formed by the delta and b chains.

The protein localises to the cell membrane. In terms of biological role, f(1)F(0) ATP synthase produces ATP from ADP in the presence of a proton or sodium gradient. F-type ATPases consist of two structural domains, F(1) containing the extramembraneous catalytic core and F(0) containing the membrane proton channel, linked together by a central stalk and a peripheral stalk. During catalysis, ATP synthesis in the catalytic domain of F(1) is coupled via a rotary mechanism of the central stalk subunits to proton translocation. This protein is part of the stalk that links CF(0) to CF(1). It either transmits conformational changes from CF(0) to CF(1) or is implicated in proton conduction. The sequence is that of ATP synthase subunit delta from Streptococcus pyogenes serotype M6 (strain ATCC BAA-946 / MGAS10394).